A 774-amino-acid chain; its full sequence is Transmembrane GTPase fzo-1 (774 aa).

Residues 1–29 are disordered; sequence MSGTASLVHTLPASGDSNHRGLHSLKNSR. Over 1–617 the chain is Cytoplasmic; that stretch reads MSGTASLVHT…EEQAMMTQMV (617 aa). A compositionally biased stretch (basic residues) spans 20–29; it reads RGLHSLKNSR. A coiled-coil region spans residues 51–71; the sequence is YGELKDNVAELEGVYKDIKEN. One can recognise a Dynamin-type G domain in the interval 97 to 352; the sequence is QRDNMKVVFF…TRALEFQNFE (256 aa). Residues 107 to 114 are G1 motif; sequence GRTSNGKS. 110–115 contributes to the GTP binding site; that stretch reads SNGKST. Positions 133–134 are G2 motif; that stretch reads TT. A G3 motif region spans residues 211–214; the sequence is DSPG. Residue 270–273 coordinates GTP; that stretch reads NRWD. The tract at residues 270-273 is G4 motif; it reads NRWD. A region of interest (G5 motif) is located at residue E300. A GTP-binding site is contributed by S317. Positions 385–415 form a coiled coil; it reads NLNSVLTSAAEQRSKLQNNLNESTRTFNECR. Residues 618 to 638 traverse the membrane as a helical segment; that stretch reads LTSAAFLANGSLGVLVVGGIV. The Mitochondrial intermembrane segment spans residues 639–640; the sequence is YK. A helical membrane pass occupies residues 641–661; sequence AVGWRVIAVGGAAYAGLYAWE. The Cytoplasmic segment spans residues 662 to 774; sequence RMRWNSGAKE…YLRSDSPPTP (113 aa).

The protein belongs to the TRAFAC class dynamin-like GTPase superfamily. Dynamin/Fzo/YdjA family. Mitofusin subfamily. As to quaternary structure, interacts with ced-9; interaction may be suppressed by interaction of ced-9 with egl-1.

It is found in the mitochondrion outer membrane. The catalysed reaction is GTP + H2O = GDP + phosphate + H(+). Its function is as follows. Probable transmembrane GTPase. Mediates mitochondrial fusion. Fusion of mitochondria occurs in many cell types and constitutes an important step in mitochondria morphology, which is balanced between fusion and fission. Dispensable for normal apoptotic processes during embryonic development. The polypeptide is Transmembrane GTPase fzo-1 (Caenorhabditis elegans).